Here is a 329-residue protein sequence, read N- to C-terminus: Serpentine receptor class alpha-2 (329 aa).

7 helical membrane passes run 25–45, 57–77, 104–124, 144–164, 188–208, 240–260, and 273–293; these read FVYLLAIILTFITTYFAVKIL, ILLVQNLFYANLYQFFHGIEA, YYKIILMGSSGMVYGQTGLLI, CAVISILVLICSSSTGRLIVW, HYFTMCAVLSTINFCISTFIL, FLTVSQFVAVFLNSFGMIVLV, and LLVVWLYAFPIVVLMFPVILV.

Belongs to the nematode receptor-like protein sra family.

Its subcellular location is the membrane. In Caenorhabditis elegans, this protein is Serpentine receptor class alpha-2 (sra-2).